We begin with the raw amino-acid sequence, 206 residues long: Holliday junction branch migration complex subunit RuvA (206 aa).

The segment at 1 to 64 is domain I; sequence MIGKLKGTVD…EDQIRLFGFV (64 aa). Positions 65–143 are domain II; it reads TEAEREWFRL…AFTAADPGLA (79 aa). Residues 144–154 are flexible linker; that stretch reads RLAADVEATEA. Positions 154-206 are domain III; sequence AAGGALADAVSALVNLGYGQAQAHTAIAAAGRKAGEDATTETLIRLGLKELAK.

It belongs to the RuvA family. Homotetramer. Forms an RuvA(8)-RuvB(12)-Holliday junction (HJ) complex. HJ DNA is sandwiched between 2 RuvA tetramers; dsDNA enters through RuvA and exits via RuvB. An RuvB hexamer assembles on each DNA strand where it exits the tetramer. Each RuvB hexamer is contacted by two RuvA subunits (via domain III) on 2 adjacent RuvB subunits; this complex drives branch migration. In the full resolvosome a probable DNA-RuvA(4)-RuvB(12)-RuvC(2) complex forms which resolves the HJ.

Its subcellular location is the cytoplasm. Functionally, the RuvA-RuvB-RuvC complex processes Holliday junction (HJ) DNA during genetic recombination and DNA repair, while the RuvA-RuvB complex plays an important role in the rescue of blocked DNA replication forks via replication fork reversal (RFR). RuvA specifically binds to HJ cruciform DNA, conferring on it an open structure. The RuvB hexamer acts as an ATP-dependent pump, pulling dsDNA into and through the RuvAB complex. HJ branch migration allows RuvC to scan DNA until it finds its consensus sequence, where it cleaves and resolves the cruciform DNA. This is Holliday junction branch migration complex subunit RuvA from Azorhizobium caulinodans (strain ATCC 43989 / DSM 5975 / JCM 20966 / LMG 6465 / NBRC 14845 / NCIMB 13405 / ORS 571).